The chain runs to 614 residues: Dihydroxy-acid dehydratase (614 aa).

Residue Asp-81 coordinates Mg(2+). Cys-122 is a binding site for [2Fe-2S] cluster. Residues Asp-123 and Lys-124 each contribute to the Mg(2+) site. Lys-124 bears the N6-carboxylysine mark. Residue Cys-196 participates in [2Fe-2S] cluster binding. A Mg(2+)-binding site is contributed by Glu-492. Ser-518 serves as the catalytic Proton acceptor.

The protein belongs to the IlvD/Edd family. In terms of assembly, homodimer. It depends on [2Fe-2S] cluster as a cofactor. Requires Mg(2+) as cofactor.

The enzyme catalyses (2R)-2,3-dihydroxy-3-methylbutanoate = 3-methyl-2-oxobutanoate + H2O. It catalyses the reaction (2R,3R)-2,3-dihydroxy-3-methylpentanoate = (S)-3-methyl-2-oxopentanoate + H2O. Its pathway is amino-acid biosynthesis; L-isoleucine biosynthesis; L-isoleucine from 2-oxobutanoate: step 3/4. The protein operates within amino-acid biosynthesis; L-valine biosynthesis; L-valine from pyruvate: step 3/4. Functions in the biosynthesis of branched-chain amino acids. Catalyzes the dehydration of (2R,3R)-2,3-dihydroxy-3-methylpentanoate (2,3-dihydroxy-3-methylvalerate) into 2-oxo-3-methylpentanoate (2-oxo-3-methylvalerate) and of (2R)-2,3-dihydroxy-3-methylbutanoate (2,3-dihydroxyisovalerate) into 2-oxo-3-methylbutanoate (2-oxoisovalerate), the penultimate precursor to L-isoleucine and L-valine, respectively. The chain is Dihydroxy-acid dehydratase from Ruegeria sp. (strain TM1040) (Silicibacter sp.).